An 85-amino-acid chain; its full sequence is ATP synthase subunit c (85 aa).

A run of 2 helical transmembrane segments spans residues 20–40 (LGAG…GNIF) and 65–85 (FALT…ILFA).

The protein belongs to the ATPase C chain family. As to quaternary structure, F-type ATPases have 2 components, F(1) - the catalytic core - and F(0) - the membrane proton channel. F(1) has five subunits: alpha(3), beta(3), gamma(1), delta(1), epsilon(1). F(0) has three main subunits: a(1), b(2) and c(10-14). The alpha and beta chains form an alternating ring which encloses part of the gamma chain. F(1) is attached to F(0) by a central stalk formed by the gamma and epsilon chains, while a peripheral stalk is formed by the delta and b chains.

The protein resides in the cell inner membrane. F(1)F(0) ATP synthase produces ATP from ADP in the presence of a proton or sodium gradient. F-type ATPases consist of two structural domains, F(1) containing the extramembraneous catalytic core and F(0) containing the membrane proton channel, linked together by a central stalk and a peripheral stalk. During catalysis, ATP synthesis in the catalytic domain of F(1) is coupled via a rotary mechanism of the central stalk subunits to proton translocation. Its function is as follows. Key component of the F(0) channel; it plays a direct role in translocation across the membrane. A homomeric c-ring of between 10-14 subunits forms the central stalk rotor element with the F(1) delta and epsilon subunits. The chain is ATP synthase subunit c from Gluconobacter oxydans (strain 621H) (Gluconobacter suboxydans).